A 130-amino-acid chain; its full sequence is Small ribosomal subunit protein uS9 (130 aa).

Residues 99 to 130 (KRAGLLTRDPRMKERKKPGLKAARRSPQFSKR) are disordered. The segment covering 111-130 (KERKKPGLKAARRSPQFSKR) has biased composition (basic residues).

It belongs to the universal ribosomal protein uS9 family.

This is Small ribosomal subunit protein uS9 from Staphylococcus aureus (strain Mu3 / ATCC 700698).